The chain runs to 955 residues: Kinesin-like protein K39 (955 aa).

A Kinesin motor domain is found at 12–392 (RVKVSVRVRP…LRYASRARDI (381 aa)). 122–129 (GQTGSGKT) contributes to the ATP binding site. Positions 426-955 (PAYVSELKKK…EERAAELASQ (530 aa)) form a coiled coil. Disordered stretches follow at residues 682–712 (ELDA…RESE) and 725–955 (TAAA…LASQ). 7 repeat units span residues 704–742 (LEQQ…TRAT), 743–781 (LEQQ…TRAT), 782–820 (LEQQ…TRAT), 821–859 (LEQQ…TRAT), 860–898 (LEQQ…TRAT), 899–937 (LEQQ…TRAA), and 938–955 (LEQQ…LASQ). Residues 704 to 955 (LEQQLRESEE…EERAAELASQ (252 aa)) form a 7 X 39 AA approximate tandem repeats region. Composition is skewed to basic and acidic residues over residues 785 to 794 (QLRDSEERAA), 824 to 833 (QLRDSEERAA), 863 to 872 (QLRESEERAA), 902 to 911 (QLRDSEERAA), and 941 to 955 (QLRD…LASQ).

This sequence belongs to the TRAFAC class myosin-kinesin ATPase superfamily. Kinesin family.

It is found in the cytoplasm. It localises to the cytoskeleton. The sequence is that of Kinesin-like protein K39 (KIN) from Leishmania chagasi.